We begin with the raw amino-acid sequence, 310 residues long: Aminoacyl tRNA synthase complex-interacting multifunctional protein 1 (310 aa).

An N-acetylalanine modification is found at A2. The required for fibroblast proliferation stretch occupies residues 6–46; that stretch reads AVLKRLEQKGAEADQIIEYLKQQVALLKEKAILQATMREEK. The interaction with HSP90B1 stretch occupies residues 54–192; sequence KLKKEIEELK…APRTVVSGLV (139 aa). Residues 92–110 show a composition bias toward polar residues; that stretch reads ASESVVQSPSVATTASPAT. Positions 92-147 are disordered; it reads ASESVVQSPSVATTASPATKEQIKAGEEKKVKEKTEKKGEKKEKQQSAAASTDSKP. Positions 101-115 are required for endothelial cell death; it reads SVATTASPATKEQIK. Residues 112–136 are compositionally biased toward basic and acidic residues; it reads EQIKAGEEKKVKEKTEKKGEKKEKQ. Residues 115–190 form a required for endothelial cell migration region; sequence KAGEEKKVKE…EAAPRTVVSG (76 aa). Residue S138 is modified to Phosphoserine. The tRNA-binding domain maps to 149–250; the sequence is DASRLDLRIG…NGSVPGDRIT (102 aa). Residue K267 is modified to N6-succinyllysine.

Homodimer. Part of the multisynthetase complex (MSC), a multisubunit complex that groups tRNA ligases for Arg (RARS1), Asp (DARS1), Gln (QARS1), Ile (IARS1), Leu (LARS1), Lys (KARS1), Met (MARS1) the bifunctional ligase for Glu and Pro (EPRS1) and the auxiliary subunits AIMP1/p43, AIMP2/p38 and EEF1E1/p18. Interacts (via N-terminus) with RARS1 (via N-terminus). Part of a complex composed of RARS1, QARS1 and AIMP1. Interacts (via C-terminus) with SMURF2. Interacts (via N-terminus) with HSP90B1/gp96 (via C-terminus). Interacts with PSMA7. Interacts with TARS3. Post-translationally, cleaved by caspase-7 in response to apoptosis to produce EMAP-II. As to expression, highly expressed in salivary glands and pancreatic alpha cells in the adult (at protein level). In the embryo, expressed primarily at sites of tissue remodeling such as ganglia, developing bones and teeth.

Its subcellular location is the nucleus. It localises to the cytoplasm. The protein resides in the cytosol. The protein localises to the secreted. It is found in the endoplasmic reticulum. Its subcellular location is the golgi apparatus. In terms of biological role, non-catalytic component of the multisynthase complex. Stimulates the catalytic activity of cytoplasmic arginyl-tRNA synthase. Binds tRNA. Possesses inflammatory cytokine activity. Negatively regulates TGF-beta signaling through stabilization of SMURF2 by binding to SMURF2 and inhibiting its SMAD7-mediated degradation. Involved in glucose homeostasis through induction of glucagon secretion at low glucose levels. Promotes dermal fibroblast proliferation and wound repair. Regulates KDELR1-mediated retention of HSP90B1/gp96 in the endoplasmic reticulum. Plays a role in angiogenesis by inducing endothelial cell migration at low concentrations and endothelian cell apoptosis at high concentrations. Induces maturation of dendritic cells and monocyte cell adhesion. Modulates endothelial cell responses by degrading HIF-1A through interaction with PSMA7. The polypeptide is Aminoacyl tRNA synthase complex-interacting multifunctional protein 1 (Aimp1) (Mus musculus (Mouse)).